A 234-amino-acid polypeptide reads, in one-letter code: 3-deoxy-manno-octulosonate cytidylyltransferase (234 aa).

It belongs to the KdsB family.

It is found in the cytoplasm. It catalyses the reaction 3-deoxy-alpha-D-manno-oct-2-ulosonate + CTP = CMP-3-deoxy-beta-D-manno-octulosonate + diphosphate. It functions in the pathway nucleotide-sugar biosynthesis; CMP-3-deoxy-D-manno-octulosonate biosynthesis; CMP-3-deoxy-D-manno-octulosonate from 3-deoxy-D-manno-octulosonate and CTP: step 1/1. It participates in bacterial outer membrane biogenesis; lipopolysaccharide biosynthesis. Activates KDO (a required 8-carbon sugar) for incorporation into bacterial lipopolysaccharide in Gram-negative bacteria. This Aquifex aeolicus (strain VF5) protein is 3-deoxy-manno-octulosonate cytidylyltransferase.